We begin with the raw amino-acid sequence, 435 residues long: Increased rDNA silencing protein 4 (435 aa).

Disordered stretches follow at residues 1 to 20, 39 to 71, 136 to 204, and 233 to 277; these read MKIPVTADAESASKDGLQHD, ASIPLEKASFSRQAPSQNPSITAKPPIPPQRAA, ASKA…NHTL, and GSKR…PDEI. Basic and acidic residues predominate over residues 11-20; that stretch reads SASKDGLQHD. Polar residues predominate over residues 48-59; that stretch reads FSRQAPSQNPSI. Low complexity-rich tracts occupy residues 174–186 and 249–265; these read SSQLSTESELLQL and QRGSPSQPLLQLSSDSS. The EH domain occupies 327–435; sequence ERKRYEEVWE…VPKSVWKSVQ (109 aa).

Belongs to the IRS4 family.

Its function is as follows. Positive regulator of phosphatidylinositol 4,5-bisphosphate turnover and negatively regulates signaling through the cell integrity pathway. Involved in rDNA silencing. The chain is Increased rDNA silencing protein 4 (IRS4) from Coccidioides immitis (strain RS) (Valley fever fungus).